The chain runs to 279 residues: Protoheme IX farnesyltransferase (279 aa).

Transmembrane regions (helical) follow at residues 5-25, 33-53, 84-103, 108-125, 133-153, 159-179, 201-221, 222-242, and 256-276; these read LILL…AGYL, IAQA…AAAF, LAYS…LLLG, LFVF…TVIL, ILGG…LGAG, AVLI…ALAY, AAVA…MTLY, LAFG…VATI, and AMWK…LALI.

Belongs to the UbiA prenyltransferase family. Protoheme IX farnesyltransferase subfamily.

It localises to the cell membrane. It catalyses the reaction heme b + (2E,6E)-farnesyl diphosphate + H2O = Fe(II)-heme o + diphosphate. The protein operates within porphyrin-containing compound metabolism; heme O biosynthesis; heme O from protoheme: step 1/1. Converts heme B (protoheme IX) to heme O by substitution of the vinyl group on carbon 2 of heme B porphyrin ring with a hydroxyethyl farnesyl side group. The protein is Protoheme IX farnesyltransferase of Pyrobaculum arsenaticum (strain DSM 13514 / JCM 11321 / PZ6).